The primary structure comprises 389 residues: 5-hydroxytryptamine receptor 1B (389 aa).

A disordered region spans residues 1–27 (MEAAGAPCAPPPPAGSQTGAPPANLSS). The Extracellular portion of the chain corresponds to 1 to 45 (MEAAGAPCAPPPPAGSQTGAPPANLSSAPHNCSAEGYIYQDSVAL). Over residues 16–27 (SQTGAPPANLSS) the composition is skewed to polar residues. N24 and N31 each carry an N-linked (GlcNAc...) asparagine glycan. Residues 46-71 (PWKVLLVILLALITLATTLSNAFVIA) traverse the membrane as a helical segment. The Cytoplasmic portion of the chain corresponds to 72 to 85 (TVYRTRKLHTPANY). A helical membrane pass occupies residues 86-110 (LIASLAVTDLLVSILVMPISTMYTV). The Extracellular segment spans residues 111–118 (TGRWTLGQ). The chain crosses the membrane as a helical span at residues 119-144 (VVCDLWLSSDITCCTASILHLCVIAL). C121 and C198 are oxidised to a cystine. D128 and T133 together coordinate ergotamine. The short motif at 145–147 (DRY) is the DRY motif; important for ligand-induced conformation changes and signaling element. Residues 145–164 (DRYWAITDAVEYSAKRTPKR) are Cytoplasmic-facing. A helical membrane pass occupies residues 165–183 (AAVMIALVWVFSISISLPP). The Extracellular segment spans residues 184-204 (FFWRQAKAEEEVSDCVVNTDH). V200 contacts ergotamine. The chain crosses the membrane as a helical span at residues 205-228 (ILYTVYSTVGAFYFPTLLLIALYG). Residues 229-314 (RIYVEARSRI…AARERKATKT (86 aa)) are Cytoplasmic-facing. Polar residues predominate over residues 258–271 (DSPGSTSSVTSVNS). A disordered region spans residues 258–281 (DSPGSTSSVTSVNSRAPDVPSESG). Residues 315-336 (LGIILGAFIVCWLPFFIISLVM) traverse the membrane as a helical segment. Residues 337–346 (PICKDACWFH) lie on the Extracellular side of the membrane. A helical transmembrane segment spans residues 347 to 369 (LAIFDFFTWLGYLNSLINPIIYT). The short motif at 364 to 368 (NPIIY) is the NPxxY motif; important for ligand-induced conformation changes and signaling element. The Cytoplasmic segment spans residues 370–389 (MSNEDFKQAFHKLIRFKCAG). Residue C387 is the site of S-palmitoyl cysteine attachment.

The protein belongs to the G-protein coupled receptor 1 family. In terms of assembly, homodimer. Heterodimer with HTR1D. Post-translationally, phosphorylated. Desensitization of the receptor may be mediated by its phosphorylation. Palmitoylated.

It is found in the cell membrane. G-protein coupled receptor for 5-hydroxytryptamine (serotonin). Also functions as a receptor for ergot alkaloid derivatives, various anxiolytic and antidepressant drugs and other psychoactive substances, such as lysergic acid diethylamide (LSD). Ligand binding causes a conformation change that triggers signaling via guanine nucleotide-binding proteins (G proteins) and modulates the activity of downstream effectors, such as adenylate cyclase. HTR1B is coupled to G(i)/G(o) G alpha proteins and mediates inhibitory neurotransmission by inhibiting adenylate cyclase activity. Arrestin family members inhibit signaling via G proteins and mediate activation of alternative signaling pathways. Regulates the release of 5-hydroxytryptamine, dopamine and acetylcholine in the brain, and thereby affects neural activity, nociceptive processing, pain perception, mood and behavior. Besides, plays a role in vasoconstriction of cerebral arteries. The sequence is that of 5-hydroxytryptamine receptor 1B (HTR1B) from Canis lupus familiaris (Dog).